A 453-amino-acid polypeptide reads, in one-letter code: Phosphomannomutase (453 aa).

Ser-96 functions as the Phosphoserine intermediate in the catalytic mechanism. Residues Ser-96, Asp-243, Asp-245, and Asp-247 each coordinate Mg(2+).

It belongs to the phosphohexose mutase family. Mg(2+) is required as a cofactor.

The enzyme catalyses alpha-D-mannose 1-phosphate = D-mannose 6-phosphate. The protein operates within nucleotide-sugar biosynthesis; GDP-alpha-D-mannose biosynthesis; alpha-D-mannose 1-phosphate from D-fructose 6-phosphate: step 2/2. It functions in the pathway bacterial outer membrane biogenesis; LPS O-antigen biosynthesis. Functionally, involved in GDP-mannose biosynthesis which serves as the activated sugar nucleotide precursor for mannose residues in cell surface polysaccharides. This enzyme participates in synthesis of the LPS O7 antigen. The polypeptide is Phosphomannomutase (manB) (Escherichia coli).